Here is a 341-residue protein sequence, read N- to C-terminus: Phosphoribosylformylglycinamidine cyclo-ligase (341 aa).

It belongs to the AIR synthase family.

Its subcellular location is the cytoplasm. The catalysed reaction is 2-formamido-N(1)-(5-O-phospho-beta-D-ribosyl)acetamidine + ATP = 5-amino-1-(5-phospho-beta-D-ribosyl)imidazole + ADP + phosphate + H(+). Its pathway is purine metabolism; IMP biosynthesis via de novo pathway; 5-amino-1-(5-phospho-D-ribosyl)imidazole from N(2)-formyl-N(1)-(5-phospho-D-ribosyl)glycinamide: step 2/2. The protein is Phosphoribosylformylglycinamidine cyclo-ligase of Xanthomonas campestris pv. campestris (strain B100).